We begin with the raw amino-acid sequence, 748 residues long: Probable transcriptional regulator SLK1 (748 aa).

2 disordered regions span residues 67–93 (QHLP…RENN) and 138–163 (QQRL…QQQQ). Over residues 71-81 (QQQQQQLLQQQ) the composition is skewed to low complexity. Residues 204–451 (PAENCITYWR…EQKIGPIEGL (248 aa)) form a dimerization region. The Nuclear localization signal signature appears at 213 to 227 (RKFVAEYFSPRAKQR). The segment covering 572–587 (NAMNNPNSNTGKQEGF) has biased composition (polar residues). Disordered stretches follow at residues 572–653 (NAMN…GNTP) and 667–712 (ENGG…NNSF). The segment covering 588 to 606 (SSQNPTPNSNQSPSSSSQQ) has biased composition (low complexity). Positions 615–653 (FPNSPQMQQQQRTMNGPTNILPQNHPHQLQSPHSHGNTP) are enriched in polar residues. Low complexity predominate over residues 667-686 (ENGGSVQQQQAFSGQSGSNS). The segment covering 687–699 (NAERNTTASTSNI) has biased composition (polar residues).

It belongs to the adn1/SEU family. In terms of assembly, forms corepressor complexes with LUH; LUH is the transcription repressor subunit and SLK1 the specific DNA-binding adapters. As to expression, expressed in young flower meristems, ovules and the carpel margin meristem.

It localises to the nucleus. Its function is as follows. Probable transcription regulator that functions in the development of the carpel margin meristem similarly to SEUSS (SEU). In association with SEU, supports organ development from meristematic regions by facilitating auxin response and thus organ initiation, and by sustaining meristematic potential through the maintenance of PHABULOSA expression. DNA-binding adapter subunit of the SEU-SLK1 transcriptional corepressor of abiotic stress (e.g. salt and osmotic stress) response genes. The sequence is that of Probable transcriptional regulator SLK1 (SLK1) from Arabidopsis thaliana (Mouse-ear cress).